Reading from the N-terminus, the 275-residue chain is NH(3)-dependent NAD(+) synthetase (275 aa).

ATP is bound at residue 46–53; the sequence is GISGGQDS. Asp-52 lines the Mg(2+) pocket. Arg-140 provides a ligand contact to deamido-NAD(+). Position 160 (Thr-160) interacts with ATP. Glu-165 is a Mg(2+) binding site. Deamido-NAD(+)-binding residues include Lys-173 and Asp-180. ATP-binding residues include Lys-189 and Thr-211. 260–261 serves as a coordination point for deamido-NAD(+); sequence HK.

Belongs to the NAD synthetase family. In terms of assembly, homodimer.

The catalysed reaction is deamido-NAD(+) + NH4(+) + ATP = AMP + diphosphate + NAD(+) + H(+). The protein operates within cofactor biosynthesis; NAD(+) biosynthesis; NAD(+) from deamido-NAD(+) (ammonia route): step 1/1. Functionally, catalyzes the ATP-dependent amidation of deamido-NAD to form NAD. Uses ammonia as a nitrogen source. In Cronobacter sakazakii (strain ATCC BAA-894) (Enterobacter sakazakii), this protein is NH(3)-dependent NAD(+) synthetase.